The sequence spans 539 residues: Neutral amino acid transporter B(0) (539 aa).

The residue at position 1 (M1) is an N-acetylmethionine. Residues M1–A52 lie on the Cytoplasmic side of the membrane. A helical transmembrane segment spans residues N53 to L82. At G83–E95 the chain is on the extracellular side. Residues L96 to A117 form a helical membrane-spanning segment. Over A118 to W131 the chain is Cytoplasmic. A helical membrane pass occupies residues A132 to L154. Residues Q155–G223 are Extracellular-facing. N-linked (GlcNAc...) asparagine glycosylation is found at N164 and N213. Residues E224–L247 traverse the membrane as a helical segment. Over G248–R256 the chain is Cytoplasmic. Residues F257–V284 traverse the membrane as a helical segment. Topologically, residues A285–I305 are extracellular. The chain crosses the membrane as a helical span at residues L306–F327. Over A328–P332 the chain is Cytoplasmic. Positions Y333 to V363 form an intramembrane region, discontinuously helical. Topologically, residues E364–H372 are cytoplasmic. The chain crosses the membrane as a helical span at residues I373–F399. Residues G381, T383, and N385 each coordinate Na(+). The Extracellular segment spans residues I400–K412. Positions I413–N446 form an intramembrane region, discontinuously helical. Residues L447–D459 are Extracellular-facing. The helical transmembrane segment at W460–L481 threads the bilayer. Residues N470 and D474 each contribute to the Na(+) site. Residues Q482 to M539 lie on the Cytoplasmic side of the membrane. S493, S502, and S537 each carry phosphoserine. Positions P518–M539 are disordered.

Belongs to the dicarboxylate/amino acid:cation symporter (DAACS) (TC 2.A.23) family. SLC1A5 subfamily. Homotrimer.

It localises to the cell membrane. The protein resides in the melanosome. The catalysed reaction is L-glutamine(out) + L-serine(in) + Na(+)(out) = L-glutamine(in) + L-serine(out) + Na(+)(in). The enzyme catalyses L-glutamine(in) + L-serine(out) + Na(+)(out) = L-glutamine(out) + L-serine(in) + Na(+)(in). It catalyses the reaction L-threonine(in) + L-glutamine(out) + Na(+)(out) = L-threonine(out) + L-glutamine(in) + Na(+)(in). It carries out the reaction L-threonine(out) + L-glutamine(in) + Na(+)(out) = L-threonine(in) + L-glutamine(out) + Na(+)(in). The catalysed reaction is L-asparagine(in) + L-glutamine(out) + Na(+)(out) = L-asparagine(out) + L-glutamine(in) + Na(+)(in). The enzyme catalyses L-asparagine(out) + L-glutamine(in) + Na(+)(out) = L-asparagine(in) + L-glutamine(out) + Na(+)(in). It catalyses the reaction L-glutamine(in) + L-alanine(out) + Na(+)(out) = L-glutamine(out) + L-alanine(in) + Na(+)(in). It carries out the reaction L-valine(out) + L-glutamine(in) + Na(+)(out) = L-valine(in) + L-glutamine(out) + Na(+)(in). The catalysed reaction is L-glutamine(in) + L-methionine(out) + Na(+)(out) = L-glutamine(out) + L-methionine(in) + Na(+)(in). The enzyme catalyses L-glutamine(in) + L-glutamate(out) + Na(+)(out) + H(+)(out) = L-glutamine(out) + L-glutamate(in) + Na(+)(in) + H(+)(in). It catalyses the reaction D-serine(in) + L-glutamine(out) + Na(+)(out) = D-serine(out) + L-glutamine(in) + Na(+)(in). It carries out the reaction D-serine(in) + L-alanine(out) + Na(+)(out) = D-serine(out) + L-alanine(in) + Na(+)(in). The catalysed reaction is nitrate(in) = nitrate(out). The enzyme catalyses iodide(out) = iodide(in). It catalyses the reaction thiocyanate(in) = thiocyanate(out). Its function is as follows. Sodium-coupled antiporter of neutral amino acids. In a tri-substrate transport cycle, exchanges neutral amino acids between the extracellular and intracellular compartments, coupled to the inward cotransport of at least one sodium ion. The preferred substrate is the essential amino acid L-glutamine, a precursor for biosynthesis of proteins, nucleotides and amine sugars as well as an alternative fuel for mitochondrial oxidative phosphorylation. Exchanges L-glutamine with other neutral amino acids such as L-serine, L-threonine and L-asparagine in a bidirectional way. Provides L-glutamine to proliferating stem and activated cells driving the metabolic switch toward cell differentiation. The transport cycle is usually pH-independent, with the exception of L-glutamate. Transports extracellular L-glutamate coupled to the cotransport of one proton and one sodium ion in exchange for intracellular L-glutamine counter-ion. May provide for L-glutamate uptake in glial cells regulating glutamine/glutamate cycle in the nervous system. Can transport D-amino acids. Mediates D-serine release from the retinal glia potentially affecting NMDA receptor function in retinal neurons. Displays sodium- and amino acid-dependent but uncoupled channel-like anion conductance with a preference SCN(-) &gt;&gt; NO3(-) &gt; I(-) &gt; Cl(-). Through binding of the fusogenic protein syncytin-1/ERVW-1 may mediate trophoblasts syncytialization, the spontaneous fusion of their plasma membranes, an essential process in placental development. In Bos taurus (Bovine), this protein is Neutral amino acid transporter B(0) (SLC1A5).